We begin with the raw amino-acid sequence, 165 residues long: Small ribosomal subunit protein uS5 (165 aa).

In terms of domain architecture, S5 DRBM spans 13–76; it reads LEEKVLVVNR…EAAKKNLMKI (64 aa).

Belongs to the universal ribosomal protein uS5 family. In terms of assembly, part of the 30S ribosomal subunit. Contacts proteins S4 and S8.

With S4 and S12 plays an important role in translational accuracy. Functionally, located at the back of the 30S subunit body where it stabilizes the conformation of the head with respect to the body. This is Small ribosomal subunit protein uS5 from Chlamydia pneumoniae (Chlamydophila pneumoniae).